A 127-amino-acid polypeptide reads, in one-letter code: Oleate-induced peroxisomal protein POX18 (127 aa).

The region spanning 14–119 is the SCP2 domain; that stretch reads FKELHEGLAD…KATAIESVFK (106 aa). The tract at residues 33-41 is hydrophobic; it reads AVNAVIVIT. The interval 43-52 is hydrophilic; that stretch reads KNKEGKEQSW.

As to quaternary structure, monomer.

It localises to the peroxisome. Its pathway is lipid metabolism; fatty acid metabolism. Functionally, is involved in beta-oxidation of long-chain fatty acids. Its exact function is unknown, but possesses a nonspecific lipid-transfer activity, despite the absence of a cysteine residue thought to be essential for the activity of its mammalian counterparts. The chain is Oleate-induced peroxisomal protein POX18 (POX18) from Candida maltosa (Yeast).